Consider the following 322-residue polypeptide: Cytochrome f (322 aa).

The signal sequence occupies residues 1–35 (MQTRNTFSWTWIREEITRSISVSLMIYIITWSSIS). Residues Y38, C58, C61, and H62 each coordinate heme. Residues 288–308 (VQGLLFFLGSVVLAQIFLVLK) traverse the membrane as a helical segment.

It belongs to the cytochrome f family. The 4 large subunits of the cytochrome b6-f complex are cytochrome b6, subunit IV (17 kDa polypeptide, petD), cytochrome f and the Rieske protein, while the 4 small subunits are PetG, PetL, PetM and PetN. The complex functions as a dimer. Heme is required as a cofactor.

Its subcellular location is the plastid. It localises to the chloroplast thylakoid membrane. In terms of biological role, component of the cytochrome b6-f complex, which mediates electron transfer between photosystem II (PSII) and photosystem I (PSI), cyclic electron flow around PSI, and state transitions. The polypeptide is Cytochrome f (Aethionema grandiflorum (Persian stone-cress)).